A 200-amino-acid polypeptide reads, in one-letter code: Small ribosomal subunit protein uS4 (200 aa).

The S4 RNA-binding domain maps to 92–155; the sequence is SRLDAVVYSL…QNLDIIKESV (64 aa).

This sequence belongs to the universal ribosomal protein uS4 family. As to quaternary structure, part of the 30S ribosomal subunit. Contacts protein S5. The interaction surface between S4 and S5 is involved in control of translational fidelity.

Functionally, one of the primary rRNA binding proteins, it binds directly to 16S rRNA where it nucleates assembly of the body of the 30S subunit. With S5 and S12 plays an important role in translational accuracy. The protein is Small ribosomal subunit protein uS4 of Staphylococcus haemolyticus (strain JCSC1435).